The sequence spans 192 residues: Small ribosomal subunit protein eS7 (192 aa).

It belongs to the eukaryotic ribosomal protein eS7 family.

This is Small ribosomal subunit protein eS7 (RpS7) from Culex quinquefasciatus (Southern house mosquito).